Here is a 324-residue protein sequence, read N- to C-terminus: DNA-directed RNA polymerase subunit alpha (324 aa).

The alpha N-terminal domain (alpha-NTD) stretch occupies residues 1-228 (MIEFQKPTIR…EHFNLFTDLS (228 aa)). Positions 245-324 (RNKLLDMTIE…STPKEEEEEK (80 aa)) are alpha C-terminal domain (alpha-CTD).

The protein belongs to the RNA polymerase alpha chain family. As to quaternary structure, homodimer. The RNAP catalytic core consists of 2 alpha, 1 beta, 1 beta' and 1 omega subunit. When a sigma factor is associated with the core the holoenzyme is formed, which can initiate transcription.

It catalyses the reaction RNA(n) + a ribonucleoside 5'-triphosphate = RNA(n+1) + diphosphate. Its function is as follows. DNA-dependent RNA polymerase catalyzes the transcription of DNA into RNA using the four ribonucleoside triphosphates as substrates. In Caldicellulosiruptor bescii (strain ATCC BAA-1888 / DSM 6725 / KCTC 15123 / Z-1320) (Anaerocellum thermophilum), this protein is DNA-directed RNA polymerase subunit alpha.